Consider the following 235-residue polypeptide: Ubiquinone/menaquinone biosynthesis C-methyltransferase UbiE (235 aa).

S-adenosyl-L-methionine contacts are provided by Thr60 and Asp81.

This sequence belongs to the class I-like SAM-binding methyltransferase superfamily. MenG/UbiE family.

The enzyme catalyses a 2-demethylmenaquinol + S-adenosyl-L-methionine = a menaquinol + S-adenosyl-L-homocysteine + H(+). It catalyses the reaction a 2-methoxy-6-(all-trans-polyprenyl)benzene-1,4-diol + S-adenosyl-L-methionine = a 5-methoxy-2-methyl-3-(all-trans-polyprenyl)benzene-1,4-diol + S-adenosyl-L-homocysteine + H(+). It participates in quinol/quinone metabolism; menaquinone biosynthesis; menaquinol from 1,4-dihydroxy-2-naphthoate: step 2/2. The protein operates within cofactor biosynthesis; ubiquinone biosynthesis. In terms of biological role, methyltransferase required for the conversion of demethylmenaquinol (DMKH2) to menaquinol (MKH2) and the conversion of 2-polyprenyl-6-methoxy-1,4-benzoquinol (DDMQH2) to 2-polyprenyl-3-methyl-6-methoxy-1,4-benzoquinol (DMQH2). This chain is Ubiquinone/menaquinone biosynthesis C-methyltransferase UbiE, found in Geotalea uraniireducens (strain Rf4) (Geobacter uraniireducens).